Here is a 97-residue protein sequence, read N- to C-terminus: CLAVATA3/ESR (CLE)-related protein ESR2-C (97 aa).

A disordered region spans residues 1-97 (TRTDDKPGVN…IGPPPFLDRY (97 aa)). 2 positions are modified to hydroxyproline: Pro47 and Pro50. Pro50 is a glycosylation site (O-linked (Ara...) hydroxyproline).

The protein belongs to the CLV3/ESR signal peptide family. The O-glycosylation (arabinosylation) of the hydroxyproline Pro-50 enhances binding affinity of the ESR2Cp peptide for its receptor. As to expression, seed endosperm.

It is found in the secreted. It localises to the extracellular space. In terms of biological role, extracellular signal peptide that regulates cell fate. The protein is CLAVATA3/ESR (CLE)-related protein ESR2-C of Zea mays (Maize).